The primary structure comprises 208 residues: N-(5'-phosphoribosyl)anthranilate isomerase (208 aa).

Belongs to the TrpF family.

The catalysed reaction is N-(5-phospho-beta-D-ribosyl)anthranilate = 1-(2-carboxyphenylamino)-1-deoxy-D-ribulose 5-phosphate. The protein operates within amino-acid biosynthesis; L-tryptophan biosynthesis; L-tryptophan from chorismate: step 3/5. The chain is N-(5'-phosphoribosyl)anthranilate isomerase from Neisseria meningitidis serogroup B (strain ATCC BAA-335 / MC58).